Reading from the N-terminus, the 176-residue chain is Ribosome maturation factor RimM (176 aa).

A PRC barrel domain is found at 93–170 (DGEYYHADLI…ELPTEIEGDT (78 aa)).

It belongs to the RimM family. In terms of assembly, binds ribosomal protein uS19.

It is found in the cytoplasm. An accessory protein needed during the final step in the assembly of 30S ribosomal subunit, possibly for assembly of the head region. Essential for efficient processing of 16S rRNA. May be needed both before and after RbfA during the maturation of 16S rRNA. It has affinity for free ribosomal 30S subunits but not for 70S ribosomes. The protein is Ribosome maturation factor RimM of Rhodopseudomonas palustris (strain BisB5).